A 212-amino-acid polypeptide reads, in one-letter code: Deoxyribose-phosphate aldolase (212 aa).

Aspartate 90 functions as the Proton donor/acceptor in the catalytic mechanism. Residue lysine 151 is the Schiff-base intermediate with acetaldehyde of the active site. Lysine 176 functions as the Proton donor/acceptor in the catalytic mechanism.

The protein belongs to the DeoC/FbaB aldolase family. DeoC type 1 subfamily.

It is found in the cytoplasm. The catalysed reaction is 2-deoxy-D-ribose 5-phosphate = D-glyceraldehyde 3-phosphate + acetaldehyde. It functions in the pathway carbohydrate degradation; 2-deoxy-D-ribose 1-phosphate degradation; D-glyceraldehyde 3-phosphate and acetaldehyde from 2-deoxy-alpha-D-ribose 1-phosphate: step 2/2. In terms of biological role, catalyzes a reversible aldol reaction between acetaldehyde and D-glyceraldehyde 3-phosphate to generate 2-deoxy-D-ribose 5-phosphate. In Halobacterium salinarum (strain ATCC 29341 / DSM 671 / R1), this protein is Deoxyribose-phosphate aldolase.